The chain runs to 393 residues: S-adenosylmethionine synthase (393 aa).

His-16 contributes to the ATP binding site. Asp-18 serves as a coordination point for Mg(2+). Glu-44 contacts K(+). 2 residues coordinate L-methionine: Glu-57 and Gln-100. Positions 100 to 110 (QSQDIAQGVDK) are flexible loop. Residues 167-169 (DAK), 238-239 (RF), Asp-247, 253-254 (RK), Ala-270, and Lys-274 each bind ATP. L-methionine is bound at residue Asp-247. Position 278 (Lys-278) interacts with L-methionine.

It belongs to the AdoMet synthase family. In terms of assembly, homotetramer; dimer of dimers. Requires Mg(2+) as cofactor. It depends on K(+) as a cofactor.

The protein resides in the cytoplasm. The enzyme catalyses L-methionine + ATP + H2O = S-adenosyl-L-methionine + phosphate + diphosphate. It participates in amino-acid biosynthesis; S-adenosyl-L-methionine biosynthesis; S-adenosyl-L-methionine from L-methionine: step 1/1. Its function is as follows. Catalyzes the formation of S-adenosylmethionine (AdoMet) from methionine and ATP. The overall synthetic reaction is composed of two sequential steps, AdoMet formation and the subsequent tripolyphosphate hydrolysis which occurs prior to release of AdoMet from the enzyme. The polypeptide is S-adenosylmethionine synthase (Delftia acidovorans (strain DSM 14801 / SPH-1)).